A 245-amino-acid polypeptide reads, in one-letter code: OCIA domain-containing protein 1 (245 aa).

Residues 1–112 (MNGRADFREP…KKLENSPLGE (112 aa)) form the OCIA domain. 4 positions are modified to phosphoserine: serine 108, serine 116, serine 123, and serine 191. Disordered stretches follow at residues 111–141 (GEAL…VSGQ) and 169–245 (NESA…TWDE). Composition is skewed to basic and acidic residues over residues 190-210 (ESPK…RESY) and 224-238 (PMHE…KVNK).

The protein belongs to the OCIAD1 family. In terms of assembly, interacts with OCIAD2. Interacts with STAT3. Isoform 1 is highly expressed in many tissues, including testis, brain, placenta, ovary, prostate and mammary gland. Isoform 2 expression is restricted to the central nervous system including brain, cerebellum and spinal cord.

Its subcellular location is the endosome. Maintains stem cell potency. Increases STAT3 phosphorylation and controls ERK phosphorylation. May act as a scaffold, increasing STAT3 recruitment onto endosomes. Involved in integrin-mediated cancer cell adhesion and colony formation in ovarian cancer. The chain is OCIA domain-containing protein 1 from Homo sapiens (Human).